The following is a 37-amino-acid chain: Large ribosomal subunit protein bL12 (37 aa).

This sequence belongs to the bacterial ribosomal protein bL12 family. Homodimer. Part of the ribosomal stalk of the 50S ribosomal subunit. Forms a multimeric L10(L12)X complex, where L10 forms an elongated spine to which 2 to 4 L12 dimers bind in a sequential fashion. Binds GTP-bound translation factors.

In terms of biological role, forms part of the ribosomal stalk which helps the ribosome interact with GTP-bound translation factors. Is thus essential for accurate translation. In Clostridium pasteurianum, this protein is Large ribosomal subunit protein bL12 (rplL).